The primary structure comprises 266 residues: Large ribosomal subunit protein uL2m (266 aa).

It belongs to the universal ribosomal protein uL2 family.

The protein resides in the mitochondrion. The polypeptide is Large ribosomal subunit protein uL2m (mrpl2) (Dictyostelium citrinum (Slime mold)).